The sequence spans 176 residues: 2-C-methyl-D-erythritol 2,4-cyclodiphosphate synthase (176 aa).

3 residues coordinate a divalent metal cation: aspartate 23, histidine 25, and histidine 60. Position 23-25 (aspartate 23–histidine 25) interacts with 4-CDP-2-C-methyl-D-erythritol 2-phosphate. 4-CDP-2-C-methyl-D-erythritol 2-phosphate is bound at residue threonine 149 to glutamate 152.

Belongs to the IspF family. Homotrimer. The cofactor is a divalent metal cation.

It carries out the reaction 4-CDP-2-C-methyl-D-erythritol 2-phosphate = 2-C-methyl-D-erythritol 2,4-cyclic diphosphate + CMP. It functions in the pathway isoprenoid biosynthesis; isopentenyl diphosphate biosynthesis via DXP pathway; isopentenyl diphosphate from 1-deoxy-D-xylulose 5-phosphate: step 4/6. In terms of biological role, involved in the biosynthesis of isopentenyl diphosphate (IPP) and dimethylallyl diphosphate (DMAPP), two major building blocks of isoprenoid compounds. Catalyzes the conversion of 4-diphosphocytidyl-2-C-methyl-D-erythritol 2-phosphate (CDP-ME2P) to 2-C-methyl-D-erythritol 2,4-cyclodiphosphate (ME-CPP) with a corresponding release of cytidine 5-monophosphate (CMP). The chain is 2-C-methyl-D-erythritol 2,4-cyclodiphosphate synthase from Chlamydia felis (strain Fe/C-56) (Chlamydophila felis).